A 104-amino-acid chain; its full sequence is Integration host factor subunit alpha (104 aa).

The protein belongs to the bacterial histone-like protein family. As to quaternary structure, heterodimer of an alpha and a beta chain.

This protein is one of the two subunits of integration host factor, a specific DNA-binding protein that functions in genetic recombination as well as in transcriptional and translational control. This Buchnera aphidicola subsp. Cinara cedri (strain Cc) protein is Integration host factor subunit alpha.